A 309-amino-acid polypeptide reads, in one-letter code: Porphobilinogen deaminase (309 aa).

S-(dipyrrolylmethanemethyl)cysteine is present on cysteine 240.

Belongs to the HMBS family. As to quaternary structure, monomer. Requires dipyrromethane as cofactor.

It carries out the reaction 4 porphobilinogen + H2O = hydroxymethylbilane + 4 NH4(+). Its pathway is porphyrin-containing compound metabolism; protoporphyrin-IX biosynthesis; coproporphyrinogen-III from 5-aminolevulinate: step 2/4. Tetrapolymerization of the monopyrrole PBG into the hydroxymethylbilane pre-uroporphyrinogen in several discrete steps. In Brevibacillus brevis (strain 47 / JCM 6285 / NBRC 100599), this protein is Porphobilinogen deaminase.